Here is a 411-residue protein sequence, read N- to C-terminus: LL-diaminopimelate aminotransferase (411 aa).

The substrate site is built by tyrosine 15 and glycine 42. Pyridoxal 5'-phosphate is bound by residues tyrosine 72, 108–109 (SK), tyrosine 132, asparagine 187, tyrosine 218, and 246–248 (SFS). Substrate is bound by residues lysine 109, tyrosine 132, and asparagine 187. Position 249 is an N6-(pyridoxal phosphate)lysine (lysine 249). Residues arginine 257 and asparagine 292 each contribute to the pyridoxal 5'-phosphate site. Positions 292 and 388 each coordinate substrate.

Belongs to the class-I pyridoxal-phosphate-dependent aminotransferase family. LL-diaminopimelate aminotransferase subfamily. As to quaternary structure, homodimer. Requires pyridoxal 5'-phosphate as cofactor.

It catalyses the reaction (2S,6S)-2,6-diaminopimelate + 2-oxoglutarate = (S)-2,3,4,5-tetrahydrodipicolinate + L-glutamate + H2O + H(+). The protein operates within amino-acid biosynthesis; L-lysine biosynthesis via DAP pathway; LL-2,6-diaminopimelate from (S)-tetrahydrodipicolinate (aminotransferase route): step 1/1. Involved in the synthesis of meso-diaminopimelate (m-DAP or DL-DAP), required for both lysine and peptidoglycan biosynthesis. Catalyzes the direct conversion of tetrahydrodipicolinate to LL-diaminopimelate. In Citrifermentans bemidjiense (strain ATCC BAA-1014 / DSM 16622 / JCM 12645 / Bem) (Geobacter bemidjiensis), this protein is LL-diaminopimelate aminotransferase.